The sequence spans 35 residues: Conotoxin Cal6.1d (35 aa).

The propeptide occupies 1 to 8 (GLTRPSKR). 3 cysteine pairs are disulfide-bonded: cysteine 9/cysteine 25, cysteine 16/cysteine 29, and cysteine 24/cysteine 34.

This sequence belongs to the conotoxin O1 superfamily. Expressed by the venom duct.

The protein resides in the secreted. Functionally, probable neurotoxin with unknown target. Possibly targets ion channels. This is Conotoxin Cal6.1d from Californiconus californicus (California cone).